Here is a 534-residue protein sequence, read N- to C-terminus: 2,3-bisphosphoglycerate-independent phosphoglycerate mutase (534 aa).

Mn(2+)-binding residues include aspartate 15 and serine 65. Serine 65 functions as the Phosphoserine intermediate in the catalytic mechanism. Residues histidine 126, 156–157, arginine 188, arginine 194, 261–264, and lysine 334 each bind substrate; these read RD and RPDR. Mn(2+)-binding residues include aspartate 401, histidine 405, aspartate 442, histidine 443, and histidine 460.

The protein belongs to the BPG-independent phosphoglycerate mutase family. Mn(2+) serves as cofactor.

It is found in the plastid. Its subcellular location is the chloroplast. The catalysed reaction is (2R)-2-phosphoglycerate = (2R)-3-phosphoglycerate. Its pathway is carbohydrate degradation; glycolysis; pyruvate from D-glyceraldehyde 3-phosphate: step 3/5. In terms of biological role, catalyzes the interconversion of 2-phosphoglycerate and 3-phosphoglycerate. This is 2,3-bisphosphoglycerate-independent phosphoglycerate mutase from Pyropia yezoensis (Susabi-nori).